Consider the following 196-residue polypeptide: Imidazole glycerol phosphate synthase subunit HisH (196 aa).

A Glutamine amidotransferase type-1 domain is found at 2–196 (KVAVVKYNAG…ERVLRNFLDL (195 aa)). The Nucleophile role is filled by Cys-77. Catalysis depends on residues His-178 and Glu-180.

In terms of assembly, heterodimer of HisH and HisF.

The protein localises to the cytoplasm. It carries out the reaction 5-[(5-phospho-1-deoxy-D-ribulos-1-ylimino)methylamino]-1-(5-phospho-beta-D-ribosyl)imidazole-4-carboxamide + L-glutamine = D-erythro-1-(imidazol-4-yl)glycerol 3-phosphate + 5-amino-1-(5-phospho-beta-D-ribosyl)imidazole-4-carboxamide + L-glutamate + H(+). It catalyses the reaction L-glutamine + H2O = L-glutamate + NH4(+). It functions in the pathway amino-acid biosynthesis; L-histidine biosynthesis; L-histidine from 5-phospho-alpha-D-ribose 1-diphosphate: step 5/9. Functionally, IGPS catalyzes the conversion of PRFAR and glutamine to IGP, AICAR and glutamate. The HisH subunit catalyzes the hydrolysis of glutamine to glutamate and ammonia as part of the synthesis of IGP and AICAR. The resulting ammonia molecule is channeled to the active site of HisF. The protein is Imidazole glycerol phosphate synthase subunit HisH of Bacteroides thetaiotaomicron (strain ATCC 29148 / DSM 2079 / JCM 5827 / CCUG 10774 / NCTC 10582 / VPI-5482 / E50).